Consider the following 160-residue polypeptide: Cyclic pyranopterin monophosphate synthase (160 aa).

Residues 76-78 and 114-115 contribute to the substrate site; these read LCH and ME. Residue Asp129 is part of the active site.

It belongs to the MoaC family. As to quaternary structure, homohexamer; trimer of dimers.

It carries out the reaction (8S)-3',8-cyclo-7,8-dihydroguanosine 5'-triphosphate = cyclic pyranopterin phosphate + diphosphate. It functions in the pathway cofactor biosynthesis; molybdopterin biosynthesis. Catalyzes the conversion of (8S)-3',8-cyclo-7,8-dihydroguanosine 5'-triphosphate to cyclic pyranopterin monophosphate (cPMP). This chain is Cyclic pyranopterin monophosphate synthase, found in Mesorhizobium japonicum (strain LMG 29417 / CECT 9101 / MAFF 303099) (Mesorhizobium loti (strain MAFF 303099)).